The following is a 494-amino-acid chain: Guanosine-5'-triphosphate,3'-diphosphate pyrophosphatase (494 aa).

The protein belongs to the GppA/Ppx family. GppA subfamily.

It catalyses the reaction guanosine 3'-diphosphate 5'-triphosphate + H2O = guanosine 3',5'-bis(diphosphate) + phosphate + H(+). It participates in purine metabolism; ppGpp biosynthesis; ppGpp from GTP: step 2/2. Its function is as follows. Catalyzes the conversion of pppGpp to ppGpp. Guanosine pentaphosphate (pppGpp) is a cytoplasmic signaling molecule which together with ppGpp controls the 'stringent response', an adaptive process that allows bacteria to respond to amino acid starvation, resulting in the coordinated regulation of numerous cellular activities. This Escherichia coli O139:H28 (strain E24377A / ETEC) protein is Guanosine-5'-triphosphate,3'-diphosphate pyrophosphatase.